The primary structure comprises 154 residues: Myoglobin (154 aa).

A Globin domain is found at 2–148 (GLSDGEWHLV…FRNDIAAKYK (147 aa)). Serine 4 carries the phosphoserine modification. Residue histidine 65 coordinates nitrite. Histidine 65 serves as a coordination point for O2. Threonine 68 is modified (phosphothreonine). Histidine 94 contributes to the heme b binding site.

The protein belongs to the globin family. Monomeric.

It is found in the cytoplasm. The protein localises to the sarcoplasm. It catalyses the reaction Fe(III)-heme b-[protein] + nitric oxide + H2O = Fe(II)-heme b-[protein] + nitrite + 2 H(+). The enzyme catalyses H2O2 + AH2 = A + 2 H2O. Its function is as follows. Monomeric heme protein which primary function is to store oxygen and facilitate its diffusion within muscle tissues. Reversibly binds oxygen through a pentacoordinated heme iron and enables its timely and efficient release as needed during periods of heightened demand. Depending on the oxidative conditions of tissues and cells, and in addition to its ability to bind oxygen, it also has a nitrite reductase activity whereby it regulates the production of bioactive nitric oxide. Under stress conditions, like hypoxia and anoxia, it also protects cells against reactive oxygen species thanks to its pseudoperoxidase activity. The protein is Myoglobin (MB) of Halichoerus grypus (Gray seal).